We begin with the raw amino-acid sequence, 353 residues long: Quinolinate synthase (353 aa).

The iminosuccinate site is built by His-47 and Ser-68. Residue Cys-113 coordinates [4Fe-4S] cluster. Residues 139-141 and Ser-156 each bind iminosuccinate; that span reads YAN. Cys-200 is a [4Fe-4S] cluster binding site. Residues 226–228 and Thr-243 contribute to the iminosuccinate site; that span reads HPE. Cys-297 serves as a coordination point for [4Fe-4S] cluster.

Belongs to the quinolinate synthase family. Type 1 subfamily. Requires [4Fe-4S] cluster as cofactor.

The protein localises to the cytoplasm. It carries out the reaction iminosuccinate + dihydroxyacetone phosphate = quinolinate + phosphate + 2 H2O + H(+). It functions in the pathway cofactor biosynthesis; NAD(+) biosynthesis; quinolinate from iminoaspartate: step 1/1. Catalyzes the condensation of iminoaspartate with dihydroxyacetone phosphate to form quinolinate. In Yersinia pseudotuberculosis serotype O:3 (strain YPIII), this protein is Quinolinate synthase.